Consider the following 1382-residue polypeptide: Hepatocyte growth factor receptor (1382 aa).

Residues 1 to 24 (MKASAVLAPGILALLFTLVQGNDG) form the signal peptide. At 25–933 (ECQEALAKSE…VIVQPDQNFT (909 aa)) the chain is on the extracellular side. Positions 27 to 516 (QEALAKSEMN…TGKKITKIPL (490 aa)) constitute a Sema domain. N45, N100, and N106 each carry an N-linked (GlcNAc...) asparagine glycan. 4 disulfides stabilise this stretch: C95-C101, C98-C160, C133-C141, and C173-C176. N-linked (GlcNAc...) asparagine glycosylation is found at N203 and N359. 2 cysteine pairs are disulfide-bonded: C299–C364 and C386–C398. N400 and N406 each carry an N-linked (GlcNAc...) asparagine glycan. Cystine bridges form between C521–C539, C527–C562, C530–C546, and C542–C552. IPT/TIG domains follow at residues 564-656 (PAIH…FSYV), 658-740 (PVIT…FSYR), and 743-837 (PIVH…LIYV). O-linked (Man) threonine glycosylation occurs at T583. Residues N608 and N636 are each glycosylated (N-linked (GlcNAc...) asparagine). T677 and T762 each carry an O-linked (Man) threonine glycan. Residues N786, N880, and N931 are each glycosylated (N-linked (GlcNAc...) asparagine). A helical transmembrane segment spans residues 934–956 (GLIVGVVSISIILLLLLGLFLWM). Residues 957–1382 (KKRKQIKDLG…QDNVNGEVDT (426 aa)) lie on the Cytoplasmic side of the membrane. S967 is modified (phosphoserine). The residue at position 978 (T978) is a Phosphothreonine. Phosphoserine is present on residues S991, S998, and S1001. Phosphotyrosine is present on Y1004. Positions 1079-1346 (VHFNEVIGRG…RISAIFSTFI (268 aa)) constitute a Protein kinase domain. Residues 1085-1093 (IGRGHFGCV) and K1111 each bind ATP. D1205 serves as the catalytic Proton acceptor. Positions 1213 to 1382 (LDEKFTVKVA…QDNVNGEVDT (170 aa)) are interaction with RANBP9. Position 1231 is a phosphotyrosine (Y1231). Residues Y1235 and Y1236 each carry the phosphotyrosine; by autocatalysis modification. The residue at position 1290 (T1290) is a Phosphothreonine. Residues 1321 to 1360 (WHPKAEMRPSFSELVSRISAIFSTFIGEHYVHVNATYVNV) form an interaction with MUC20 region. Phosphotyrosine; by autocatalysis occurs at positions 1350 and 1357. A Phosphotyrosine modification is found at Y1366.

Belongs to the protein kinase superfamily. Tyr protein kinase family. As to quaternary structure, heterodimer made of an alpha chain (50 kDa) and a beta chain (145 kDa) which are disulfide linked. Binds PLXNB1. Interacts when phosphorylated with downstream effectors including STAT3, PIK3R1, SRC, PCLG1, GRB2 and GAB1. Interacts with SPSB1, SPSB2 and SPSB4. Interacts with INPP5D/SHIP1. When phosphorylated at Tyr-1357, interacts with INPPL1/SHIP2. Interacts with RANBP9 and RANBP10, as well as SPSB1, SPSB2, SPSB3 and SPSB4. SPSB1 binding occurs in the presence and in the absence of HGF, however HGF treatment has a positive effect on this interaction. Interacts with MUC20; prevents interaction with GRB2 and suppresses hepatocyte growth factor-induced cell proliferation. Interacts with GRB10. Interacts with PTPN1 and PTPN2. Interacts with HSP90AA1 and HSP90AB1; the interaction suppresses MET kinase activity. Interacts with tensin TNS3. Interacts (when phosphorylated) with tensin TNS4 (via SH2 domain); the interaction increases MET protein stability by inhibiting MET endocytosis and subsequent lysosomal degradation. Autophosphorylated in response to ligand binding on Tyr-1235 and Tyr-1236 in the kinase domain leading to further phosphorylation of Tyr-1350 and Tyr-1357 in the C-terminal multifunctional docking site. Dephosphorylated by PTPRJ at Tyr-1350 and Tyr-1366. Dephosphorylated by PTPN1 and PTPN2. In terms of processing, ubiquitinated. Ubiquitination by CBL regulates the receptor stability and activity through proteasomal degradation. Post-translationally, O-mannosylation of IPT/TIG domains by TMEM260 is required for protein maturation. O-mannosylated residues are composed of single mannose glycans that are not elongated or modified.

The protein resides in the membrane. The enzyme catalyses L-tyrosyl-[protein] + ATP = O-phospho-L-tyrosyl-[protein] + ADP + H(+). Its activity is regulated as follows. In its inactive state, the C-terminal tail interacts with the catalytic domain and inhibits the kinase activity. Upon ligand binding, the C-terminal tail is displaced and becomes phosphorylated, thus increasing the kinase activity. In terms of biological role, receptor tyrosine kinase that transduces signals from the extracellular matrix into the cytoplasm by binding to hepatocyte growth factor/HGF ligand. Regulates many physiological processes including proliferation, scattering, morphogenesis and survival. Ligand binding at the cell surface induces autophosphorylation of MET on its intracellular domain that provides docking sites for downstream signaling molecules. Following activation by ligand, interacts with the PI3-kinase subunit PIK3R1, PLCG1, SRC, GRB2, STAT3 or the adapter GAB1. Recruitment of these downstream effectors by MET leads to the activation of several signaling cascades including the RAS-ERK, PI3 kinase-AKT, or PLCgamma-PKC. The RAS-ERK activation is associated with the morphogenetic effects while PI3K/AKT coordinates prosurvival effects. During embryonic development, MET signaling plays a role in gastrulation, development and migration of muscles and neuronal precursors, angiogenesis and kidney formation. In adults, participates in wound healing as well as organ regeneration and tissue remodeling. Also promotes differentiation and proliferation of hematopoietic cells. The protein is Hepatocyte growth factor receptor (MET) of Eulemur macaco macaco (Black lemur).